A 351-amino-acid polypeptide reads, in one-letter code: Rhodopsin (351 aa).

At 1–36 (MNGTEGQDFYVPMSNKTGVVRSPFEYPQYYLAEPWK) the chain is on the extracellular side. Residues Asn2 and Asn15 are each glycosylated (N-linked (GlcNAc...) asparagine). The chain crosses the membrane as a helical span at residues 37–61 (FSALAAYMFMLILLGFPVNFLTLYV). Residues 62–73 (TIQHKKLRTPLN) are Cytoplasmic-facing. Residues 74-96 (YILLNLVVADLFMVFGGFTTTMY) form a helical membrane-spanning segment. The Extracellular portion of the chain corresponds to 97-110 (TSMNGYFVFGVTGC). Residues Cys110 and Cys187 are joined by a disulfide bond. A helical transmembrane segment spans residues 111 to 133 (YIEGFFATLGGEIALWSLVVLAV). The 'Ionic lock' involved in activated form stabilization motif lies at 134–136 (ERY). Residues 134 to 152 (ERYVVVCKPMSNFRFGENH) are Cytoplasmic-facing. Residues 153–173 (AIMGVAFSWIMAMACAAPPLF) traverse the membrane as a helical segment. The Extracellular segment spans residues 174–202 (GWSRYIPEGMQCSCGIDYYTLKPEINNES). Residues 203–224 (FVIYMFVVHFMIPLAVIFFCYG) traverse the membrane as a helical segment. The Cytoplasmic portion of the chain corresponds to 225–252 (NLVCTVKEAAAQQQESATTQKAEKEVTR). Residues 253-274 (MVIIMVIAFLICWVPYASVAFY) form a helical membrane-spanning segment. Over 275-286 (IFTNQGSDFGPI) the chain is Extracellular. Residues 287-308 (FMTIPAFFAKSSAIYNPVIYIV) traverse the membrane as a helical segment. Lys296 carries the N6-(retinylidene)lysine modification. The Cytoplasmic segment spans residues 309–351 (MNKQFRNCMITTLCCGKNPLGDEDTSAGKTETSSVSTSQVSPA). 2 S-palmitoyl cysteine lipidation sites follow: Cys322 and Cys323. Positions 331 to 351 (EDTSAGKTETSSVSTSQVSPA) are disordered. The span at 340-351 (TSSVSTSQVSPA) shows a compositional bias: low complexity. Ser341 is modified (phosphoserine; by RK and GRK7).

Belongs to the G-protein coupled receptor 1 family. Opsin subfamily. Post-translationally, contains one covalently linked retinal chromophore. Upon light absorption, the covalently bound 11-cis-retinal is converted to all-trans-retinal. After hydrolysis of the Schiff base and release of the covalently bound all-trans-retinal, active rhodopsin is regenerated by binding of a fresh molecule of 11-cis-retinal.

It localises to the membrane. The protein localises to the cell projection. It is found in the cilium. Its subcellular location is the photoreceptor outer segment. Functionally, photoreceptor required for image-forming vision at low light intensity. Required for photoreceptor cell viability after birth. Light-induced isomerization of 11-cis to all-trans retinal triggers a conformational change that activates signaling via G-proteins. Subsequent receptor phosphorylation mediates displacement of the bound G-protein alpha subunit by arrestin and terminates signaling. This is Rhodopsin (RHO) from Gallus gallus (Chicken).